The primary structure comprises 111 residues: uncharacterized protein (111 aa).

The chain crosses the membrane as a helical span at residues 81 to 101 (YFFLLFYVSFPHIFLGLFFFI).

It localises to the membrane. This is an uncharacterized protein from Schizosaccharomyces pombe (strain 972 / ATCC 24843) (Fission yeast).